The sequence spans 152 residues: UPF0266 membrane protein YobD (152 aa).

3 helical membrane-spanning segments follow: residues 6 to 26 (LVLI…QFIM), 45 to 65 (VDSV…VTSH), and 67 to 87 (AQMT…IFWI).

The protein belongs to the UPF0266 family.

The protein localises to the cell inner membrane. The polypeptide is UPF0266 membrane protein YobD (Salmonella agona (strain SL483)).